We begin with the raw amino-acid sequence, 189 residues long: Peptidyl-tRNA hydrolase (189 aa).

Residue tyrosine 16 coordinates tRNA. Histidine 21 acts as the Proton acceptor in catalysis. 3 residues coordinate tRNA: phenylalanine 67, asparagine 69, and asparagine 115.

Belongs to the PTH family. As to quaternary structure, monomer.

It is found in the cytoplasm. It carries out the reaction an N-acyl-L-alpha-aminoacyl-tRNA + H2O = an N-acyl-L-amino acid + a tRNA + H(+). Functionally, hydrolyzes ribosome-free peptidyl-tRNAs (with 1 or more amino acids incorporated), which drop off the ribosome during protein synthesis, or as a result of ribosome stalling. Its function is as follows. Catalyzes the release of premature peptidyl moieties from peptidyl-tRNA molecules trapped in stalled 50S ribosomal subunits, and thus maintains levels of free tRNAs and 50S ribosomes. This Legionella pneumophila subsp. pneumophila (strain Philadelphia 1 / ATCC 33152 / DSM 7513) protein is Peptidyl-tRNA hydrolase.